The primary structure comprises 892 residues: Alanine--tRNA ligase (892 aa).

Residues H574, H578, C676, and H680 each contribute to the Zn(2+) site.

Belongs to the class-II aminoacyl-tRNA synthetase family. The cofactor is Zn(2+).

Its subcellular location is the cytoplasm. The enzyme catalyses tRNA(Ala) + L-alanine + ATP = L-alanyl-tRNA(Ala) + AMP + diphosphate. In terms of biological role, catalyzes the attachment of alanine to tRNA(Ala) in a two-step reaction: alanine is first activated by ATP to form Ala-AMP and then transferred to the acceptor end of tRNA(Ala). Also edits incorrectly charged Ser-tRNA(Ala) and Gly-tRNA(Ala) via its editing domain. This Prochlorococcus marinus (strain MIT 9313) protein is Alanine--tRNA ligase.